The following is a 341-amino-acid chain: MMTSVPPRKSWWTSKKTVKVIRSYPTFPSLNAWEKFRGLLPVDGETNPGVGLGVEEGLLCQMVHSPEFNLFPNSVVFESNFVQVRRSRNWKEIYKASNTMALGVTSSVPCLPLPNILLMARVKWHQGQSQTWNRPSRAPSINLKSILPLKFVELQIWDDQERVLRLRTVTEKIYYLKLHPDHPETVFHFWIRLVQILHKGLSITTKDPTILVTHCLVPKSLCSPGGKTELVQKKSKGLQPSESLTHLMAQGESETLSQIFSDLHQQKQYRSEKMHINKTSSEKATPCEDSIPCTCDLNWRDAFMFGEWERENPSGPQPLSLLGTLAASSRPRLSLTGGNSI.

Belongs to the GARIN family. In terms of tissue distribution, expressed in testis (at protein level).

It localises to the golgi apparatus. RAB2B effector protein required for accurate acrosome formation and normal male fertility. In complex with RAB2A/RAB2B, seems to suppress excessive vesicle trafficking during acrosome formation. The protein is Golgi-associated RAB2 interactor protein 1B of Mus musculus (Mouse).